Reading from the N-terminus, the 288-residue chain is Bifunctional protein FolD (288 aa).

NADP(+)-binding positions include 164–166 and isoleucine 230; that span reads GTS.

Belongs to the tetrahydrofolate dehydrogenase/cyclohydrolase family. In terms of assembly, homodimer.

It carries out the reaction (6R)-5,10-methylene-5,6,7,8-tetrahydrofolate + NADP(+) = (6R)-5,10-methenyltetrahydrofolate + NADPH. It catalyses the reaction (6R)-5,10-methenyltetrahydrofolate + H2O = (6R)-10-formyltetrahydrofolate + H(+). Its pathway is one-carbon metabolism; tetrahydrofolate interconversion. Its function is as follows. Catalyzes the oxidation of 5,10-methylenetetrahydrofolate to 5,10-methenyltetrahydrofolate and then the hydrolysis of 5,10-methenyltetrahydrofolate to 10-formyltetrahydrofolate. This is Bifunctional protein FolD from Mycoplasma mycoides subsp. mycoides SC (strain CCUG 32753 / NCTC 10114 / PG1).